Here is a 392-residue protein sequence, read N- to C-terminus: Chalcone synthase B (392 aa).

The active site involves cysteine 167.

Belongs to the thiolase-like superfamily. Chalcone/stilbene synthases family. As to expression, expressed at low level in seedlings after illumination with UV light. No expression in flowers or tissue culture.

The enzyme catalyses (E)-4-coumaroyl-CoA + 3 malonyl-CoA + 3 H(+) = 2',4,4',6'-tetrahydroxychalcone + 3 CO2 + 4 CoA. It participates in secondary metabolite biosynthesis; flavonoid biosynthesis. Its function is as follows. The primary product of this enzyme is 4,2',4',6'-tetrahydroxychalcone (also termed naringenin-chalcone or chalcone) which can under specific conditions spontaneously isomerize into naringenin. The chain is Chalcone synthase B (CHSB) from Petunia hybrida (Petunia).